We begin with the raw amino-acid sequence, 375 residues long: Protein HrmA (375 aa).

In terms of biological role, unknown. May serve a regulatory function. The sequence is that of Protein HrmA (hrmA) from Pseudomonas syringae pv. syringae.